The sequence spans 362 residues: Solute carrier family 25 member 3 (362 aa).

The transit peptide at 1-49 (MFSSVAHLARANPFNTPHLQLVHDGLGDLRSSSPGPTGQPRRPRNLAAA) directs the protein to the mitochondrion. Over 50–63 (AVEEQYSCDYGSGR) the chain is Mitochondrial intermembrane. 3 Solcar repeats span residues 63 to 147 (RFFI…FKVL), 160 to 244 (WRTS…TVEA), and 261 to 339 (EQLV…VKVY). Residues 64 to 86 (FFILCGLGGIISCGTTHTALVPL) traverse the membrane as a helical segment. The Mitochondrial matrix segment spans residues 87 to 121 (DLVKCRMQVDPQKYKGIFNGFSVTLKEDGVRGLAK). Lys-99 carries the N6-acetyllysine modification. Lys-112 is modified (N6-methyllysine). Residues 122-141 (GWAPTFLGYSMQGLCKFGFY) form a helical membrane-spanning segment. The Mitochondrial intermembrane segment spans residues 142–161 (EVFKVLYSNMLGEENTYLWR). The helical transmembrane segment at 162 to 183 (TSLYLAASASAEFFADIALAPM) threads the bilayer. Over 184–218 (EAAKVRIQTQPGYANTLRDAAPKMYKEEGLKAFYK) the chain is Mitochondrial matrix. Position 196 is a phosphotyrosine (Tyr-196). Position 209 is an N6-acetyllysine (Lys-209). Residues 219 to 238 (GVAPLWMRQIPYTMMKFACF) traverse the membrane as a helical segment. The Mitochondrial intermembrane segment spans residues 239–261 (ERTVEALYKFVVPKPRSECSKPE). The chain crosses the membrane as a helical span at residues 262–284 (QLVVTFVAGYIAGVFCAIVSHPA). Topologically, residues 285–314 (DSVVSVLNKEKGSSASLVLKRLGFKGVWKG) are mitochondrial matrix. The chain crosses the membrane as a helical span at residues 315 to 333 (LFARIIMIGTLTALQWFIY). Residues 334–362 (DSVKVYFRLPRPPPPEMPESLKKKLGLTQ) are Mitochondrial intermembrane-facing.

It belongs to the mitochondrial carrier (TC 2.A.29) family. Interacts with PPIF; the interaction is impaired by CsA.

It is found in the mitochondrion inner membrane. It catalyses the reaction phosphate(in) + H(+)(in) = phosphate(out) + H(+)(out). Functionally, inorganic ion transporter that transports phosphate or copper ions across the mitochondrial inner membrane into the matrix compartment. Mediates proton-coupled symport of phosphate ions necessary for mitochondrial oxidative phosphorylation of ADP to ATP. Transports copper ions probably in the form of anionic copper(I) complexes to maintain mitochondrial matrix copper pool and to supply copper for cytochrome C oxidase complex assembly. May also play a role in regulation of the mitochondrial permeability transition pore (mPTP). This is Solute carrier family 25 member 3 from Homo sapiens (Human).